Consider the following 251-residue polypeptide: Regulator of G-protein signaling 7-binding protein B (251 aa).

Positions 1 to 43 (MCSAPNGRKNRPRSAANIFQIGKSSVRDPERRESTESARRAQR) are disordered. Over residues 25 to 43 (SVRDPERRESTESARRAQR) the composition is skewed to basic and acidic residues. S-palmitoyl cysteine attachment occurs at residues Cys246 and Cys247.

This sequence belongs to the RGS7BP/RGS9BP family. In terms of processing, palmitoylated. Undergoes rapid palmitoylation turnover. Palmitoylation regulates the cell membrane and nuclear shuttling and the regulation of GPCR signaling. Upon depalmitoylation, it is targeted from the plasma membrane into the nucleus. GPCR signaling inhibits depalmitoylation and promotes localization to the plasma membrane.

It is found in the nucleus. The protein localises to the cytoplasm. Its subcellular location is the cell membrane. Regulator of G protein-coupled receptor (GPCR) signaling. Regulatory subunit of the R7-Gbeta5 complexes that acts by controlling the subcellular location of the R7-Gbeta5 complexes. When palmitoylated, it targets the R7-Gbeta5 complexes to the plasma membrane, leading to inhibit G protein alpha subunits. When it is unpalmitoylated, the R7-Gbeta5 complexes undergo a nuclear/cytoplasmic shuttling. In Danio rerio (Zebrafish), this protein is Regulator of G-protein signaling 7-binding protein B (rgs7bpb).